Here is a 504-residue protein sequence, read N- to C-terminus: Histidine ammonia-lyase (504 aa).

A cross-link (5-imidazolinone (Ala-Gly)) is located at residues 142–144 (ASG). Residue S143 is modified to 2,3-didehydroalanine (Ser).

Belongs to the PAL/histidase family. Contains an active site 4-methylidene-imidazol-5-one (MIO), which is formed autocatalytically by cyclization and dehydration of residues Ala-Ser-Gly.

The protein localises to the cytoplasm. The catalysed reaction is L-histidine = trans-urocanate + NH4(+). It functions in the pathway amino-acid degradation; L-histidine degradation into L-glutamate; N-formimidoyl-L-glutamate from L-histidine: step 1/3. The protein is Histidine ammonia-lyase of Staphylococcus aureus (strain MSSA476).